A 196-amino-acid polypeptide reads, in one-letter code: Putative 3-methyladenine DNA glycosylase (196 aa).

This sequence belongs to the DNA glycosylase MPG family.

The polypeptide is Putative 3-methyladenine DNA glycosylase (Bacillus licheniformis (strain ATCC 14580 / DSM 13 / JCM 2505 / CCUG 7422 / NBRC 12200 / NCIMB 9375 / NCTC 10341 / NRRL NRS-1264 / Gibson 46)).